We begin with the raw amino-acid sequence, 664 residues long: Translation factor guf1, mitochondrial (664 aa).

The N-terminal 43 residues, 1–43, are a transit peptide targeting the mitochondrion; that stretch reads MRGCLQLARWLSAGPKCPAASLPKAPSGLYNTIRSFTSSAQLA. The 181-residue stretch at 66–246 folds into the tr-type G domain; sequence DRYRNFCIVA…TVVEKIPAPV (181 aa). GTP-binding positions include 75–82, 139–143, and 193–196; these read AHVDHGKS, DTPGH, and NKVD.

This sequence belongs to the TRAFAC class translation factor GTPase superfamily. Classic translation factor GTPase family. LepA subfamily.

It localises to the mitochondrion inner membrane. The enzyme catalyses GTP + H2O = GDP + phosphate + H(+). In terms of biological role, promotes mitochondrial protein synthesis. May act as a fidelity factor of the translation reaction, by catalyzing a one-codon backward translocation of tRNAs on improperly translocated ribosomes. Binds to mitochondrial ribosomes in a GTP-dependent manner. The chain is Translation factor guf1, mitochondrial (guf1) from Aspergillus oryzae (strain ATCC 42149 / RIB 40) (Yellow koji mold).